The following is a 131-amino-acid chain: Hyastatin (131 aa).

A signal peptide spans 1 to 16 (MRVLLILVSLAALAHA). 3 disulfides stabilise this stretch: Cys-103–Cys-117, Cys-107–Cys-124, and Cys-118–Cys-125. Lys-130 bears the Lysine amide mark.

Strongly expressed in hemocytes, with weaker expression in gills and epidermis. Expressed at low levels in hepatopancreas.

The protein resides in the cytoplasmic granule. Its function is as follows. Antimicrobial peptide. Has strong antibacterial activity against the Gram-positive bacterium C.glutamicum (MIC=0.4 uM) and the Gram-negative bacterium E.coli (MIC=12.5 uM). Has weak antibacterial activity against the Gram-positive bacterium S.aureus (MIC&gt;50 uM) and the Gram-negative bacterium P.aeruginosa (MIC&gt;50 uM). Has antifungal activity against S.cerevisiae (MIC=12.5) and C.albicans (MIC=6.3 uM). Has weak antifungal activity against the mold B.cinerea. Presents chitin-binding activity. This Hyas araneus (Atlantic lyre crab) protein is Hyastatin.